Consider the following 127-residue polypeptide: Serum amyloid A protein (127 aa).

The first 18 residues, 1–18, serve as a signal peptide directing secretion; the sequence is MKLLTSLFLLSLVLCVNS. Position 19 is a pyrrolidone carboxylic acid (glutamine 19). The disordered stretch occupies residues 89–127; it reads GGSSGRGVEDSMADQEANRWGRSGKDPNRYRPKGLDPKY. Over residues 104–127 the composition is skewed to basic and acidic residues; the sequence is EANRWGRSGKDPNRYRPKGLDPKY.

The protein belongs to the SAA family. Expressed by the liver; secreted in plasma.

It is found in the secreted. Major acute phase reactant. Apolipoprotein of the HDL complex. This is Serum amyloid A protein (SAA1) from Notamacropus eugenii (Tammar wallaby).